The following is a 733-amino-acid chain: Alpha-galactosidase 1 (733 aa).

The active-site Nucleophile is the Asp-480. Asp-550 serves as the catalytic Proton donor.

The protein belongs to the glycosyl hydrolase 36 family.

It carries out the reaction Hydrolysis of terminal, non-reducing alpha-D-galactose residues in alpha-D-galactosides, including galactose oligosaccharides, galactomannans and galactolipids.. Its function is as follows. Alpha-galactosidase associated with the raffinose operon. In Pediococcus pentosaceus, this protein is Alpha-galactosidase 1 (agaR).